The following is a 423-amino-acid chain: Probable histone-binding protein rbbD (423 aa).

WD repeat units follow at residues 119 to 159 (NHEG…LEPT), 172 to 212 (GHKK…KSDS), 222 to 262 (GHTS…KPIH), 266 to 306 (AHNS…NRLH), 310 to 350 (SHTD…EEQN), and 367 to 407 (GHTS…YNDR).

It belongs to the WD repeat RBAP46/RBAP48/MSI1 family. In terms of assembly, probably binds directly to helix 1 of the histone fold of histone H4, a region that is not accessible when H4 is in chromatin.

Its subcellular location is the nucleus. Functionally, core histone-binding subunit that may target chromatin assembly factors, chromatin remodeling factors and histone deacetylases to their histone substrates in a manner that is regulated by nucleosomal DNA. Component of several complexes which regulate chromatin metabolism. The polypeptide is Probable histone-binding protein rbbD (rbbD) (Dictyostelium discoideum (Social amoeba)).